The sequence spans 345 residues: Peptidoglycan-recognition protein LE (345 aa).

A compositionally biased stretch (basic and acidic residues) spans 1–16 (MSESGIKKLSQERTRE). A disordered region spans residues 1–38 (MSESGIKKLSQERTREWLASQEDEELESIAESSVVDSL). N-linked (GlcNAc...) asparagine glycosylation is found at Asn52, Asn95, Asn98, and Asn106. The tract at residues 124 to 152 (NRRDRRHVSPPRDNAPKTPTHFEDDYQDE) is disordered. Residues 198–324 (PVKYVVILHT…CQCNSTESPG (127 aa)) enclose the N-acetylmuramoyl-L-alanine amidase domain. Peptidoglycan is bound by residues His206, 229–240 (HIESRGWNDIAY), Arg254, 261–267 (AHTLGYN), and 314–322 (HCQCNSTES). Asn318 carries N-linked (GlcNAc...) asparagine glycosylation.

The protein belongs to the N-acetylmuramoyl-L-alanine amidase 2 family. Monomer. Peptidoglycan binding induces oligomerization. As to expression, expressed in hemolymph. Localizes at the lumenal surface of the trachea (at protein level).

The protein resides in the secreted. Peptidoglycan-recognition protein that plays a key role in innate immunity by binding to murein peptidoglycans (PGN) of Gram-negative bacteria and activating the imd/Relish pathway. Has no activity against on Gram-positive bacteria. Binds to diaminopimelic acid-type PGN (DAP-type PGN), an activator of the imd/Relish pathway. Functions synergistically with PGRP-LC in producing resistance to E.coli and B.megaterium infections, which have the DAP-type peptidoglycan. Acts both upstream and in parallel with PGRP-LC in the imd/Relish pathway, and is required for infection-dependent activation of melanization. Required for Relish processing and nuclear translocation following proteolytic cleavage. Its localization suggests a role in the recognition and subsequent activation of the signaling at the first point of contact with invading bacteria. This chain is Peptidoglycan-recognition protein LE (PGRP-LE), found in Drosophila melanogaster (Fruit fly).